Reading from the N-terminus, the 367-residue chain is Peptide chain release factor 1 (367 aa).

Residue glutamine 243 is modified to N5-methylglutamine.

The protein belongs to the prokaryotic/mitochondrial release factor family. Post-translationally, methylated by PrmC. Methylation increases the termination efficiency of RF1.

It is found in the cytoplasm. Functionally, peptide chain release factor 1 directs the termination of translation in response to the peptide chain termination codons UAG and UAA. In Acidovorax ebreus (strain TPSY) (Diaphorobacter sp. (strain TPSY)), this protein is Peptide chain release factor 1.